A 129-amino-acid chain; its full sequence is L-ectoine synthase (129 aa).

It belongs to the ectoine synthase family.

It carries out the reaction (2S)-4-acetamido-2-aminobutanoate = L-ectoine + H2O. It participates in amine and polyamine biosynthesis; ectoine biosynthesis; L-ectoine from L-aspartate 4-semialdehyde: step 3/3. Functionally, catalyzes the circularization of gamma-N-acetyl-alpha,gamma-diaminobutyric acid (ADABA) to ectoine (1,4,5,6-tetrahydro-2-methyl-4-pyrimidine carboxylic acid), which is an excellent osmoprotectant. The sequence is that of L-ectoine synthase from Desulfosudis oleivorans (strain DSM 6200 / JCM 39069 / Hxd3) (Desulfococcus oleovorans).